A 256-amino-acid chain; its full sequence is 5-keto-4-deoxy-D-glucarate aldolase (256 aa).

The active-site Proton acceptor is the His50. Gln151 is a substrate binding site. Glu153 serves as a coordination point for Mg(2+). Substrate is bound by residues Ser178 and Asp179. Asp179 contacts Mg(2+).

The protein belongs to the HpcH/HpaI aldolase family. KDGluc aldolase subfamily. In terms of assembly, homohexamer; trimer of dimers. Mg(2+) serves as cofactor.

It catalyses the reaction 5-dehydro-4-deoxy-D-glucarate = 2-hydroxy-3-oxopropanoate + pyruvate. The catalysed reaction is 2-dehydro-3-deoxy-D-glucarate = 2-hydroxy-3-oxopropanoate + pyruvate. Its pathway is carbohydrate acid metabolism; galactarate degradation; D-glycerate from galactarate: step 2/3. Functionally, catalyzes the reversible retro-aldol cleavage of both 5-keto-4-deoxy-D-glucarate and 2-keto-3-deoxy-D-glucarate to pyruvate and tartronic semialdehyde. The protein is 5-keto-4-deoxy-D-glucarate aldolase of Enterobacter sp. (strain 638).